The chain runs to 357 residues: UDP-N-acetylglucosamine--N-acetylmuramyl-(pentapeptide) pyrophosphoryl-undecaprenol N-acetylglucosamine transferase (357 aa).

UDP-N-acetyl-alpha-D-glucosamine-binding residues include R166, S196, and Q290.

It belongs to the glycosyltransferase 28 family. MurG subfamily.

The protein resides in the cell membrane. The enzyme catalyses Mur2Ac(oyl-L-Ala-gamma-D-Glu-L-Lys-D-Ala-D-Ala)-di-trans,octa-cis-undecaprenyl diphosphate + UDP-N-acetyl-alpha-D-glucosamine = beta-D-GlcNAc-(1-&gt;4)-Mur2Ac(oyl-L-Ala-gamma-D-Glu-L-Lys-D-Ala-D-Ala)-di-trans,octa-cis-undecaprenyl diphosphate + UDP + H(+). It functions in the pathway cell wall biogenesis; peptidoglycan biosynthesis. Cell wall formation. Catalyzes the transfer of a GlcNAc subunit on undecaprenyl-pyrophosphoryl-MurNAc-pentapeptide (lipid intermediate I) to form undecaprenyl-pyrophosphoryl-MurNAc-(pentapeptide)GlcNAc (lipid intermediate II). This is UDP-N-acetylglucosamine--N-acetylmuramyl-(pentapeptide) pyrophosphoryl-undecaprenol N-acetylglucosamine transferase from Staphylococcus epidermidis (strain ATCC 35984 / DSM 28319 / BCRC 17069 / CCUG 31568 / BM 3577 / RP62A).